Reading from the N-terminus, the 381-residue chain is Chaperone protein DnaJ (381 aa).

Positions Asp-5–Gly-70 constitute a J domain. Residues Gly-137–Thr-215 form a CR-type zinc finger. Zn(2+) is bound by residues Cys-150, Cys-153, Cys-167, Cys-170, Cys-189, Cys-192, Cys-203, and Cys-206. CXXCXGXG motif repeat units follow at residues Cys-150–Gly-157, Cys-167–Gly-174, Cys-189–Gly-196, and Cys-203–Gly-210.

The protein belongs to the DnaJ family. In terms of assembly, homodimer. The cofactor is Zn(2+).

The protein localises to the cytoplasm. Participates actively in the response to hyperosmotic and heat shock by preventing the aggregation of stress-denatured proteins and by disaggregating proteins, also in an autonomous, DnaK-independent fashion. Unfolded proteins bind initially to DnaJ; upon interaction with the DnaJ-bound protein, DnaK hydrolyzes its bound ATP, resulting in the formation of a stable complex. GrpE releases ADP from DnaK; ATP binding to DnaK triggers the release of the substrate protein, thus completing the reaction cycle. Several rounds of ATP-dependent interactions between DnaJ, DnaK and GrpE are required for fully efficient folding. Also involved, together with DnaK and GrpE, in the DNA replication of plasmids through activation of initiation proteins. The protein is Chaperone protein DnaJ of Chromohalobacter salexigens (strain ATCC BAA-138 / DSM 3043 / CIP 106854 / NCIMB 13768 / 1H11).